Consider the following 444-residue polypeptide: Acyl-CoA 6-desaturase (444 aa).

Residues 1–131 (MGKGGNQGEG…DMNLFKTNHV (131 aa)) are Cytoplasmic-facing. One can recognise a Cytochrome b5 heme-binding domain in the interval 18 to 95 (VPTFSWEEIQ…LKPLLIGELA (78 aa)). The helical transmembrane segment at 132-152 (FFLLLLAHIIALESIAWFTVF) threads the bilayer. Over 153 to 157 (YFGNG) the chain is Lumenal. A helical transmembrane segment spans residues 158–178 (WIPTLITAFVLATSQAQAGWL). The Cytoplasmic segment spans residues 179–264 (QHDYGHLSVY…KYLPYNHQHE (86 aa)). Positions 180–184 (HDYGH) match the Histidine box-1 motif. The Histidine box-2 motif lies at 217-221 (HFQHH). A helical transmembrane segment spans residues 265 to 285 (YFFLIGPPLLIPMYFQYQIIM). At 286–305 (TMIVHKNWVDLAWAVSYYIR) the chain is on the lumenal side. A helical transmembrane segment spans residues 306–326 (FFITYIPFYGILGALLFLNFI). At 327–444 (RFLESHWFVW…KLWLDAYLHK (118 aa)) the chain is on the cytoplasmic side. Positions 382-386 (QIEHH) match the Histidine box-3 motif.

It belongs to the fatty acid desaturase type 1 family. In terms of tissue distribution, expressed in a wide array of tissues, highest expression is found in liver followed by brain, lung, heart, and retina. A lower level is found in breast tumor when compared with normal tissues; lowest levels were found in patients with poor prognostic index.

The protein resides in the endoplasmic reticulum membrane. The enzyme catalyses (9Z,12Z)-octadecadienoyl-CoA + 2 Fe(II)-[cytochrome b5] + O2 + 2 H(+) = (6Z,9Z,12Z)-octadecatrienoyl-CoA + 2 Fe(III)-[cytochrome b5] + 2 H2O. It carries out the reaction (9Z,12Z,15Z)-octadecatrienoyl-CoA + 2 Fe(II)-[cytochrome b5] + O2 + 2 H(+) = (6Z,9Z,12Z,15Z)-octadecatetraenoyl-CoA + 2 Fe(III)-[cytochrome b5] + 2 H2O. The catalysed reaction is hexadecanoyl-CoA + 2 Fe(II)-[cytochrome b5] + O2 + 2 H(+) = (6Z)-hexadecenoyl-CoA + 2 Fe(III)-[cytochrome b5] + 2 H2O. It catalyses the reaction (9Z,12Z,15Z,18Z,21Z)-tetracosapentaenoyl-CoA + 2 Fe(II)-[cytochrome b5] + O2 + 2 H(+) = (6Z,9Z,12Z,15Z,18Z,21Z)-tetracosahexaenoyl-CoA + 2 Fe(III)-[cytochrome b5] + 2 H2O. The enzyme catalyses (11E)-octadecenoyl-CoA + 2 Fe(II)-[cytochrome b5] + O2 + 2 H(+) = (6Z,11E)-octadecadienoyl-CoA + 2 Fe(III)-[cytochrome b5] + 2 H2O. It carries out the reaction (11Z,14Z)-eicosadienoyl-CoA + 2 Fe(II)-[cytochrome b5] + O2 + 2 H(+) = (8Z,11Z,14Z)-eicosatrienoyl-CoA + 2 Fe(III)-[cytochrome b5] + 2 H2O. The catalysed reaction is (11Z,14Z,17Z)-eicosatrienoyl-CoA + 2 Fe(II)-[cytochrome b5] + O2 + 2 H(+) = (8Z,11Z,14Z,17Z)-eicosatetraenoyl-CoA + 2 Fe(III)-[cytochrome b5] + 2 H2O. The protein operates within lipid metabolism; polyunsaturated fatty acid biosynthesis. Functionally, involved in the biosynthesis of highly unsaturated fatty acids (HUFA) from the essential polyunsaturated fatty acids (PUFA) linoleic acid (LA) (18:2n-6) and alpha-linolenic acid (ALA) (18:3n-3) precursors, acting as a fatty acyl-coenzyme A (CoA) desaturase that introduces a cis double bond at carbon 6 of the fatty acyl chain. Catalyzes the first and rate limiting step in this pathway which is the desaturation of LA (18:2n-6) and ALA (18:3n-3) into gamma-linoleate (GLA) (18:3n-6) and stearidonate (18:4n-3), respectively. Subsequently, in the biosynthetic pathway of HUFA n-3 series, it desaturates tetracosapentaenoate (24:5n-3) to tetracosahexaenoate (24:6n-3), which is then converted to docosahexaenoate (DHA)(22:6n-3), an important lipid for nervous system function. Desaturates hexadecanate (palmitate) to produce 6Z-hexadecenoate (sapienate), a fatty acid unique to humans and major component of human sebum, that has been implicated in the development of acne and may have potent antibacterial activity. It can also desaturate (11E)-octadecenoate (trans-vaccenoate, the predominant trans fatty acid in human milk) at carbon 6 generating (6Z,11E)-octadecadienoate. In addition to Delta-6 activity, this enzyme exhibits Delta-8 activity with slight biases toward n-3 fatty acyl-CoA substrates. This chain is Acyl-CoA 6-desaturase, found in Homo sapiens (Human).